Reading from the N-terminus, the 319-residue chain is 4-hydroxy-3-methylbut-2-enyl diphosphate reductase (319 aa).

Cys-15 provides a ligand contact to [4Fe-4S] cluster. (2E)-4-hydroxy-3-methylbut-2-enyl diphosphate-binding residues include His-44 and His-77. Residues His-44 and His-77 each coordinate dimethylallyl diphosphate. Isopentenyl diphosphate is bound by residues His-44 and His-77. Cys-99 provides a ligand contact to [4Fe-4S] cluster. His-127 serves as a coordination point for (2E)-4-hydroxy-3-methylbut-2-enyl diphosphate. His-127 is a dimethylallyl diphosphate binding site. Position 127 (His-127) interacts with isopentenyl diphosphate. Residue Glu-129 is the Proton donor of the active site. A (2E)-4-hydroxy-3-methylbut-2-enyl diphosphate-binding site is contributed by Thr-172. Cys-202 lines the [4Fe-4S] cluster pocket. (2E)-4-hydroxy-3-methylbut-2-enyl diphosphate contacts are provided by Ser-230, Ser-231, Asn-232, and Ser-274. Residues Ser-230, Ser-231, Asn-232, and Ser-274 each contribute to the dimethylallyl diphosphate site. 4 residues coordinate isopentenyl diphosphate: Ser-230, Ser-231, Asn-232, and Ser-274.

This sequence belongs to the IspH family. It depends on [4Fe-4S] cluster as a cofactor.

It carries out the reaction isopentenyl diphosphate + 2 oxidized [2Fe-2S]-[ferredoxin] + H2O = (2E)-4-hydroxy-3-methylbut-2-enyl diphosphate + 2 reduced [2Fe-2S]-[ferredoxin] + 2 H(+). The enzyme catalyses dimethylallyl diphosphate + 2 oxidized [2Fe-2S]-[ferredoxin] + H2O = (2E)-4-hydroxy-3-methylbut-2-enyl diphosphate + 2 reduced [2Fe-2S]-[ferredoxin] + 2 H(+). It functions in the pathway isoprenoid biosynthesis; dimethylallyl diphosphate biosynthesis; dimethylallyl diphosphate from (2E)-4-hydroxy-3-methylbutenyl diphosphate: step 1/1. It participates in isoprenoid biosynthesis; isopentenyl diphosphate biosynthesis via DXP pathway; isopentenyl diphosphate from 1-deoxy-D-xylulose 5-phosphate: step 6/6. Its function is as follows. Catalyzes the conversion of 1-hydroxy-2-methyl-2-(E)-butenyl 4-diphosphate (HMBPP) into a mixture of isopentenyl diphosphate (IPP) and dimethylallyl diphosphate (DMAPP). Acts in the terminal step of the DOXP/MEP pathway for isoprenoid precursor biosynthesis. The chain is 4-hydroxy-3-methylbut-2-enyl diphosphate reductase from Xanthomonas euvesicatoria pv. vesicatoria (strain 85-10) (Xanthomonas campestris pv. vesicatoria).